The primary structure comprises 104 residues: Large ribosomal subunit protein bL21 (104 aa).

Belongs to the bacterial ribosomal protein bL21 family. As to quaternary structure, part of the 50S ribosomal subunit. Contacts protein L20.

Functionally, this protein binds to 23S rRNA in the presence of protein L20. This is Large ribosomal subunit protein bL21 from Salinispora tropica (strain ATCC BAA-916 / DSM 44818 / JCM 13857 / NBRC 105044 / CNB-440).